A 556-amino-acid polypeptide reads, in one-letter code: Thermosome subunit beta (556 aa).

The interval 530–556 (LSTDKGDDDGGAGGMGGGMGGGMGGMM) is disordered. A compositionally biased stretch (gly residues) spans 540–556 (GAGGMGGGMGGGMGGMM).

The protein belongs to the TCP-1 chaperonin family. As to quaternary structure, forms an oligomeric complex of eight-membered rings.

In terms of biological role, molecular chaperone; binds unfolded polypeptides in vitro, and has a weak ATPase activity. This is Thermosome subunit beta (thsB) from Halobacterium salinarum (strain ATCC 700922 / JCM 11081 / NRC-1) (Halobacterium halobium).